Here is a 343-residue protein sequence, read N- to C-terminus: Holliday junction branch migration complex subunit RuvB (343 aa).

Residues 1 to 181 (MDRIIDTAAT…FGIVQRLEFY (181 aa)) form a large ATPase domain (RuvB-L) region. ATP contacts are provided by residues Ile20, Arg21, Gly62, Lys65, Thr66, Thr67, 128–130 (EDF), Arg171, Tyr181, and Arg218. Thr66 contributes to the Mg(2+) binding site. The small ATPAse domain (RuvB-S) stretch occupies residues 182 to 252 (SPEDLARIVR…VAQAAMQMLK (71 aa)). Residues 255–343 (QGGFDELDRR…SAFTDPEDLF (89 aa)) are head domain (RuvB-H). Residues Arg291, Arg310, and Arg315 each contribute to the DNA site.

The protein belongs to the RuvB family. Homohexamer. Forms an RuvA(8)-RuvB(12)-Holliday junction (HJ) complex. HJ DNA is sandwiched between 2 RuvA tetramers; dsDNA enters through RuvA and exits via RuvB. An RuvB hexamer assembles on each DNA strand where it exits the tetramer. Each RuvB hexamer is contacted by two RuvA subunits (via domain III) on 2 adjacent RuvB subunits; this complex drives branch migration. In the full resolvosome a probable DNA-RuvA(4)-RuvB(12)-RuvC(2) complex forms which resolves the HJ.

It localises to the cytoplasm. It catalyses the reaction ATP + H2O = ADP + phosphate + H(+). In terms of biological role, the RuvA-RuvB-RuvC complex processes Holliday junction (HJ) DNA during genetic recombination and DNA repair, while the RuvA-RuvB complex plays an important role in the rescue of blocked DNA replication forks via replication fork reversal (RFR). RuvA specifically binds to HJ cruciform DNA, conferring on it an open structure. The RuvB hexamer acts as an ATP-dependent pump, pulling dsDNA into and through the RuvAB complex. RuvB forms 2 homohexamers on either side of HJ DNA bound by 1 or 2 RuvA tetramers; 4 subunits per hexamer contact DNA at a time. Coordinated motions by a converter formed by DNA-disengaged RuvB subunits stimulates ATP hydrolysis and nucleotide exchange. Immobilization of the converter enables RuvB to convert the ATP-contained energy into a lever motion, pulling 2 nucleotides of DNA out of the RuvA tetramer per ATP hydrolyzed, thus driving DNA branch migration. The RuvB motors rotate together with the DNA substrate, which together with the progressing nucleotide cycle form the mechanistic basis for DNA recombination by continuous HJ branch migration. Branch migration allows RuvC to scan DNA until it finds its consensus sequence, where it cleaves and resolves cruciform DNA. In Xylella fastidiosa (strain 9a5c), this protein is Holliday junction branch migration complex subunit RuvB.